The sequence spans 244 residues: Meiotic drive suppressor wtf2 (244 aa).

Positions 1–10 (MKNNYTSLKS) are enriched in polar residues. The interval 1–68 (MKNNYTSLKS…RENNPSRSTD (68 aa)) is disordered. Basic and acidic residues predominate over residues 17 to 30 (ELKTDHEIDLEKGP). The next 4 membrane-spanning stretches (helical) occupy residues 73–93 (FLIK…LAIC), 110–130 (WTLF…LTYF), 149–169 (WENM…VGSP), and 183–203 (LKWS…VFIA).

The protein belongs to the WTF family. Homomer. Interacts with other proteins that exhibit high sequence similarity.

Its subcellular location is the spore membrane. The protein resides in the vacuole membrane. Acts as a suppressor component of the dual wtf meiotic drive system, and can suppress but not confer meiotic drive by compatible poisons. Wtf meiotic drive systems promote unequal transmission of alleles from the parental zygote to progeny spores by encoding a poison and an antidote from the same locus; the poison is trans-acting and forms toxic aggregates in all spores within an ascus, wherease the antidote is spore-specific and targets aggregates for degradation by the vacuole. Meiotic drive by wtf systems therefore lead to poisoning of all progeny that do not inherit the dual poison/antidote allele, or express a compatible antidote. This is Meiotic drive suppressor wtf2 from Schizosaccharomyces kambucha (Fission yeast).